The following is a 302-amino-acid chain: Acetylglutamate kinase (302 aa).

Substrate-binding positions include 68–69 (GG), arginine 90, and asparagine 195.

This sequence belongs to the acetylglutamate kinase family. ArgB subfamily.

It is found in the cytoplasm. The catalysed reaction is N-acetyl-L-glutamate + ATP = N-acetyl-L-glutamyl 5-phosphate + ADP. It participates in amino-acid biosynthesis; L-arginine biosynthesis; N(2)-acetyl-L-ornithine from L-glutamate: step 2/4. Functionally, catalyzes the ATP-dependent phosphorylation of N-acetyl-L-glutamate. This chain is Acetylglutamate kinase, found in Marinomonas sp. (strain MWYL1).